Consider the following 811-residue polypeptide: Probable inorganic carbon transporter subunit DabA (811 aa).

Positions 336, 338, 498, and 513 each coordinate Zn(2+).

Belongs to the inorganic carbon transporter (TC 9.A.2) DabA family. Forms a complex with DabB. The cofactor is Zn(2+).

Its subcellular location is the cell inner membrane. In terms of biological role, part of an energy-coupled inorganic carbon pump. The chain is Probable inorganic carbon transporter subunit DabA from Azorhizobium caulinodans (strain ATCC 43989 / DSM 5975 / JCM 20966 / LMG 6465 / NBRC 14845 / NCIMB 13405 / ORS 571).